The chain runs to 1402 residues: MTTKRSLFVRLVPCRCLRGEEETVTTLDYSHCSLEQVPKEIFTFEKTLEELYLDANQIEELPKQLFNCQSLHKLSLPDNDLTTLPASIANLINLRELDVSKNGIQEFPENIKNCKVLTIVEASVNPISKLPDGFSQLLNLTQLYLNDAFLEFLPANFGRLTKLQILELRENQLKMLPKTMNRLTQLERLDLGSNEFTEVPEVLEQLSGLREFWMDGNRLTFIPGFIGSLRQLTYLDVSKNNIEMVEEGISTCENLQDFLLSSNSLQQLPETIGSLKNVTTLKIDENQLMYLPDSIGGLRSIEELDCSFNEIEALPSSIGQLTNMRTFAADHNYLQQLPPEIGNWKNITVLFLHCNKLETLPEEMGDMQKLKVINLSDNRLKNLPFSFTKLQQLTAMWLSDNQSKPLIPLQKETDTETQKMVLTNYMFPQQPRTEDVMFISDNESFNPALWEEQRKQRAQVAFECDEDKDEREAPPREGNLKRYPTPYPDELKNMVKTVQTIVHRLKDEETNEESGRDLKQHEDQQVVNKDKCVKTSESTTTKSKLDEREKYMNSVQKMSEPEAETNGGNLPVTASMKLSGNLKHIVNHDDVFEESEELSSDEEMKMAEMRPPLIESSINQPKVVALSNNKKDDAKDADSLSDEVTHNSNQNNSNCSSPSRMSDSVSLNTDSSQDTSLCSPVKQTPVDSNSKVRQEDENFNSLLQNGVNLNNSPEEKFKINDKKDFKLPEYDLNIEEQLVLIEKDIDSKATSDDSRQLDHINMNINKLVTNNIFQPEVMERSKMQDIVLGTGFLSIHPKNEAEHIENGAKFPNLESINKVNGLCEDTAPSPGRVEPQKASSSADVGISKSTEDLSPQRSGPTGAVVKSHSITNMETGGLKIYDILGDDGPQPPSAAVKIASAVDGKNIVRSKSATLLYDQPLQVFTAASSSSELLSGTKAVFKFDSNHNPEEPDIIRAATVSGPQSTPHLYGPPQYNVQYSGSATVKDTLWHPKQNPQIDPVSFPPQRLPRSESAENHSYAKHSANMNFSNHNNVRANTGYHLQQRLAPARHGEMWAISPNDRLVPAVTRTTIQRQSSVSSTASVNLGDPTRRTEGDYLSYRELHSMGRTPVMSGSQRPLSARAYSIDGPNTSRPQSARPSINEIPERTMSVSDFNYSRTSPSKRPNTRVGSEHSLLDPPGKSKVPHDWREQVLRHIEAKKLEKHPQTSSPGECCQDDRFMSEEQNHPSGALSHRGLPDSLMKMPLSNGQMGQPLRPQAHYSQTHHPPQASVARHPSREQLIDYLMLKVAHQPPYTHPHCSPRQGHELAKQEIRVRVEKDPELGFSISGGVGGRGNPFRPDDDGIFVTRVQPEGPASKLLQPGDKIIQANGYSFINIEHGQAVSLLKTFHNAVDLIIVREVSS.

LRR repeat units lie at residues 23–44, 47–68, 70–91, 93–114, 116–137, 139–161, 162–183, 185–206, 208–229, 231–252, 254–275, 277–298, 300–321, 323–344, 346–367, 369–391, and 392–413; these read TVTTLDYSHCSLEQVPKEIFTF, TLEELYLDANQIEELPKQLFNC, SLHKLSLPDNDLTTLPASIANL, NLRELDVSKNGIQEFPENIKNC, VLTIVEASVNPISKLPDGFSQL, NLTQLYLNDAFLEFLPANFGRLT, KLQILELRENQLKMLPKTMNRL, QLERLDLGSNEFTEVPEVLEQL, GLREFWMDGNRLTFIPGFIGSL, QLTYLDVSKNNIEMVEEGISTC, NLQDFLLSSNSLQQLPETIGSL, NVTTLKIDENQLMYLPDSIGGL, SIEELDCSFNEIEALPSSIGQL, NMRTFAADHNYLQQLPPEIGNW, NITVLFLHCNKLETLPEEMGDM, KLKVINLSDNRLKNLPFSFTKLQ, and QLTAMWLSDNQSKPLIPLQKET. Phosphoserine is present on residues Ser440 and Ser444. Disordered stretches follow at residues 465–489 and 507–543; these read DEDKDEREAPPREGNLKRYPTPYPD and DEETNEESGRDLKQHEDQQVVNKDKCVKTSESTTTKS. Residues 470–480 are compositionally biased toward basic and acidic residues; that stretch reads EREAPPREGNL. The residue at position 483 (Tyr483) is a Phosphotyrosine. Phosphothreonine is present on Thr485. The span at 507 to 534 shows a compositional bias: basic and acidic residues; sequence DEETNEESGRDLKQHEDQQVVNKDKCVK. Phosphoserine occurs at positions 595, 599, 600, and 617. Over residues 629-638 the composition is skewed to basic and acidic residues; sequence NKKDDAKDAD. A disordered region spans residues 629-694; the sequence is NKKDDAKDAD…PVDSNSKVRQ (66 aa). The span at 647–659 shows a compositional bias: low complexity; sequence NSNQNNSNCSSPS. Residues 660 to 689 are compositionally biased toward polar residues; sequence RMSDSVSLNTDSSQDTSLCSPVKQTPVDSN. Ser712, Ser849, Ser854, and Ser869 each carry phosphoserine. The tract at residues 824–864 is disordered; the sequence is EDTAPSPGRVEPQKASSSADVGISKSTEDLSPQRSGPTGAV. Phosphothreonine is present on Thr914. At Tyr917 the chain carries Phosphotyrosine. Ser928 carries the post-translational modification Phosphoserine. At Tyr970 the chain carries Phosphotyrosine. Disordered regions lie at residues 990–1018 and 1070–1093; these read WHPKQNPQIDPVSFPPQRLPRSESAENHS and TTIQRQSSVSSTASVNLGDPTRRT. Residues 1070–1084 show a composition bias toward polar residues; it reads TTIQRQSSVSSTASV. Tyr1097 is modified (phosphotyrosine). Disordered stretches follow at residues 1107-1187, 1198-1217, and 1222-1274; these read GRTP…VPHD, AKKLEKHPQTSSPGECCQDD, and EEQN…VARH. Polar residues-rich tracts occupy residues 1128 to 1139 and 1149 to 1164; these read GPNTSRPQSARP and MSVSDFNYSRTSPSKR. Ser1150 and Ser1171 each carry phosphoserine. Leu1231, Arg1234, and Ser1276 each carry phosphoserine. The PDZ domain occupies 1311–1400; the sequence is EIRVRVEKDP…AVDLIIVREV (90 aa).

The protein belongs to the LAP (LRR and PDZ) protein family. In terms of assembly, interacts with ERBB2, BPAG1 and ITGB4. May favor the localization of ERBB2, by restricting its presence to the basolateral membrane of epithelial cells. Also found to interact with ARVCF and delta catenin. Interacts (via C-terminus) with DST (via N-terminus). Interacts with NOD2 (via CARD domain). Isoform 2 is phosphorylated on Ser-1231 and Ser-1234.

It localises to the cell junction. Its subcellular location is the hemidesmosome. It is found in the nucleus membrane. The protein localises to the basolateral cell membrane. Its function is as follows. Acts as an adapter for the receptor ERBB2, in epithelia. By binding the unphosphorylated ERBB2 'Tyr-1248' receptor, it may contribute to stabilize this unphosphorylated state. Inhibits NOD2-dependent NF-kappa-B signaling and pro-inflammatory cytokine secretion. In Mus musculus (Mouse), this protein is Erbin.